The primary structure comprises 383 residues: tRNA (guanine-N(7)-)-methyltransferase non-catalytic subunit wuho (383 aa).

5 WD repeats span residues 61–101 (NLEV…ALLL), 105–144 (ALARASSALAFAPDSSSVLVTDKTGDCYQYDCVEVEAPPK), 148–187 (GHLSIVYDIVWTPDLKHIITCDRDDKIRVTNYPATHDIHS), 191–231 (GHKE…EVLQ), and 289–329 (AGSW…QAES).

The protein belongs to the WD repeat TRM82 family. In terms of assembly, forms a heterodimer with the catalytic subunit Mettl1. Interacts with mei-P26 and weakly interacts with bgcn; required for the function or formation of the mei-P26-bgcn-bam-sxl complex. Interacts with nanos; may be involved in mei-P26-dependent derepression of the BMP signaling pathway. Interacts with Myc; the interaction may be mediated by mei-P26 and may be involved in the regulation of ribosome biogenesis. In testis, it is present at high level in hub cells, a niche for germline stem cells of testis. Ubiquitously expressed in all testicular cells throughout spermatogenesis. Ubiquitously expressed in all germline and somatic cells of the ovary.

The protein resides in the nucleus. It is found in the cytoplasm. It functions in the pathway tRNA modification; N(7)-methylguanine-tRNA biosynthesis. Required for the Mettl1-dependent formation of N(7)-methylguanine at position 46 (m7G46) in tRNA. In the Mettl1-wuho methyltransferase complex, it is required to stabilize and induce conformational changes of the catalytic subunit. Required for binding of nanos mRNA and repression of translation by the mei-P26-bgcn-bam-sxl complex. May cooperate with mei-P26 and nanos to derepress the BMP signaling pathway. May cooperate with mei-P26 to suppress expression of a subset of microRNAs. May cooperate with mei-P26 to regulate bam expression levels in germline cells during gametogenesis. Required to promote mitosis to meiosis transition during gametogenesis. May regulate germline cell division in part by regulating ribosome biogenesis. This Drosophila mojavensis (Fruit fly) protein is tRNA (guanine-N(7)-)-methyltransferase non-catalytic subunit wuho.